The primary structure comprises 417 residues: Serpin A9 (417 aa).

The N-terminal stretch at 1 to 23 is a signal peptide; that stretch reads MASYLYGVLFAVGLCAPIYCVSP. Residues Asn101 and Asn390 are each glycosylated (N-linked (GlcNAc...) asparagine).

Belongs to the serpin family. As to expression, highly expressed in normal germinal center (GC) B-cells and GC B-cell-derived malignancies.

It is found in the secreted. The protein resides in the cytoplasm. Its subcellular location is the membrane. Functionally, protease inhibitor that inhibits trypsin and trypsin-like serine proteases (in vitro). Inhibits plasmin and thrombin with lower efficiency (in vitro). In Homo sapiens (Human), this protein is Serpin A9 (SERPINA9).